A 42-amino-acid polypeptide reads, in one-letter code: Photosystem I reaction center subunit IX (42 aa).

A helical membrane pass occupies residues 7–27 (YLSTAPVLAAVWFTVLAGILI).

The protein belongs to the PsaJ family.

The protein resides in the plastid. The protein localises to the chloroplast thylakoid membrane. Functionally, may help in the organization of the PsaE and PsaF subunits. This Ostreococcus tauri protein is Photosystem I reaction center subunit IX.